Here is a 429-residue protein sequence, read N- to C-terminus: MLSKKQLRLDMKAVANALKKRYFYFDVDHLIELESNRKKNQIETQNLQNLRNMQSKAIGKAKASGEDIKSLLKNVSDLSTKLNLAKSNLQLIQSEIDVIVLSMPNIPHHSVPNGKSEEDNIEVSKWGKLVNYDFDVKDHVDLGAMYGLDFETAVKISGARFSVMTGKIARLHRALTQFMLDRHSEVNGYTEAYVPYLVNTESLIGTGQLPKFEADLFKTYLHGEKGETKTLYLIPTGEVPVTNMMRDMIIKENDLPLKFVTHTPSFRSEAGSYGRYTRGLIRQHQFEKVELVQVVKAQDSYQALEVLTTHAEDILQALELPYRKISLCAGDLGFSATKTYDLEVWLPGQNVYCEISSCSCFEDFQARRLQLRYKNKETNKLELLHTLNGSGLAVGRTLVAVLENHQQADRSIKIPFVLQSYMGGLEVMN.

L-serine is bound at residue T236–E238. R267 to E269 is an ATP binding site. E290 is an L-serine binding site. E354–S357 serves as a coordination point for ATP. L-serine is bound at residue S390.

This sequence belongs to the class-II aminoacyl-tRNA synthetase family. Type-1 seryl-tRNA synthetase subfamily. In terms of assembly, homodimer. The tRNA molecule binds across the dimer.

It localises to the cytoplasm. It catalyses the reaction tRNA(Ser) + L-serine + ATP = L-seryl-tRNA(Ser) + AMP + diphosphate + H(+). It carries out the reaction tRNA(Sec) + L-serine + ATP = L-seryl-tRNA(Sec) + AMP + diphosphate + H(+). It participates in aminoacyl-tRNA biosynthesis; selenocysteinyl-tRNA(Sec) biosynthesis; L-seryl-tRNA(Sec) from L-serine and tRNA(Sec): step 1/1. Its function is as follows. Catalyzes the attachment of serine to tRNA(Ser). Is also able to aminoacylate tRNA(Sec) with serine, to form the misacylated tRNA L-seryl-tRNA(Sec), which will be further converted into selenocysteinyl-tRNA(Sec). This is Serine--tRNA ligase from Vesicomyosocius okutanii subsp. Calyptogena okutanii (strain HA).